Here is a 577-residue protein sequence, read N- to C-terminus: Arginine--tRNA ligase (577 aa).

The short motif at 122-132 (PNVAKEMHVGH) is the 'HIGH' region element.

The protein belongs to the class-I aminoacyl-tRNA synthetase family. Monomer.

It is found in the cytoplasm. It catalyses the reaction tRNA(Arg) + L-arginine + ATP = L-arginyl-tRNA(Arg) + AMP + diphosphate. The sequence is that of Arginine--tRNA ligase from Escherichia coli O139:H28 (strain E24377A / ETEC).